The sequence spans 512 residues: ATP synthase subunit alpha (512 aa).

169-176 (GDRQTGKT) serves as a coordination point for ATP.

The protein belongs to the ATPase alpha/beta chains family. F-type ATPases have 2 components, CF(1) - the catalytic core - and CF(0) - the membrane proton channel. CF(1) has five subunits: alpha(3), beta(3), gamma(1), delta(1), epsilon(1). CF(0) has three main subunits: a(1), b(2) and c(9-12). The alpha and beta chains form an alternating ring which encloses part of the gamma chain. CF(1) is attached to CF(0) by a central stalk formed by the gamma and epsilon chains, while a peripheral stalk is formed by the delta and b chains.

It is found in the cell inner membrane. The enzyme catalyses ATP + H2O + 4 H(+)(in) = ADP + phosphate + 5 H(+)(out). In terms of biological role, produces ATP from ADP in the presence of a proton gradient across the membrane. The alpha chain is a regulatory subunit. The sequence is that of ATP synthase subunit alpha from Rickettsia akari (strain Hartford).